Here is a 1846-residue protein sequence, read N- to C-terminus: Unconventional myosin-Vb (1846 aa).

The Myosin N-terminal SH3-like domain maps to 8-60 (SRYTRVWIPDPDEVWRSAELTKDYKDGDESLQLRLEDDTILDYPIDVQNNQVP). The interval 21–40 (VWRSAELTKDYKDGDESLQL) is requires for interaction with LIMA1. The Myosin motor domain maps to 69–763 (VGENDLTALS…QVAYLEKLRA (695 aa)). 163–170 (GESGAGKT) contributes to the ATP binding site. The interval 599–629 (VPATNTAKSRSSSKINVRSSRPLMKAPNKEH) is disordered. Low complexity predominate over residues 607–619 (SRSSSKINVRSSR). An actin-binding region spans residues 641-663 (LNLLMETLNATTPHYVRCIKPND). IQ domains follow at residues 767 to 788 (REATIMIQKTVRGWLQRVKYRR), 789 to 813 (LRAATLTLQRFCRGYLARRLTEHLR), 814 to 837 (RTRAAIVFQKQYRMLKARRAYCRV), 838 to 861 (RRAAVIIQSYTRGHVCTQKLPPVL), 862 to 884 (TEHKATIIQKYARGWMARRHFQR), and 885 to 914 (QRDAAIVIQCAFRRLKARQALKALKIEARS). Coiled-coil stretches lie at residues 915-1272 (AEHL…ADQR) and 1334-1450 (LKQV…RHHE). The segment at 1088 to 1122 (RDEQQTPGHRKNPSNQSSLESDSNYPSISTSEIGD) is disordered. The segment covering 1100–1120 (PSNQSSLESDSNYPSISTSEI) has biased composition (polar residues). Ser1444 carries the post-translational modification Phosphoserine. In terms of domain architecture, Dilute spans 1524 to 1801 (SSTINGIKKV…IRTIQAQLQE (278 aa)).

Belongs to the TRAFAC class myosin-kinesin ATPase superfamily. Myosin family. As to quaternary structure, component of the CART complex, at least composed of ACTN4, HGS/HRS, MYO5B and TRIM3. Interacts with RAB11FIP2. Interacts with RAB11A and RAB8A. Found in a complex with CFTR and RAB11A. Interacts with NPC1L1. Interacts with LIMA1.

It localises to the cytoplasm. In terms of biological role, may be involved in vesicular trafficking via its association with the CART complex. The CART complex is necessary for efficient transferrin receptor recycling but not for EGFR degradation. Required in a complex with RAB11A and RAB11FIP2 for the transport of NPC1L1 to the plasma membrane. Together with RAB11A participates in CFTR trafficking to the plasma membrane and TF (transferrin) recycling in nonpolarized cells. Together with RAB11A and RAB8A participates in epithelial cell polarization. Together with RAB25 regulates transcytosis. Required for proper localization of bile salt export pump ABCB11 at the apical/canalicular plasma membrane of hepatocytes. This chain is Unconventional myosin-Vb (Myo5b), found in Rattus norvegicus (Rat).